Here is a 411-residue protein sequence, read N- to C-terminus: uncharacterized protein (411 aa).

The N-terminal stretch at 1-21 is a signal peptide; the sequence is MHSRILLLLLMFAFNVGLINC. Residues 28–67 form the EGF-like domain; that stretch reads PQSNCKIRCENGGMCVFDLERPDFHSCICLLGVYTGDRCQ. 3 disulfides stabilise this stretch: cysteine 32–cysteine 42, cysteine 36–cysteine 54, and cysteine 56–cysteine 66. Residues 78–97 show a composition bias toward polar residues; the sequence is TATSDETSHPMNIQHQQSQA. 2 disordered regions span residues 78–312 and 337–375; these read TATS…EPIR and HPIEEDEYWDETSKKTDEDSWTAENEGTKKTEEADEYGM. A compositionally biased stretch (basic and acidic residues) spans 100–230; sequence DDARRRDDER…VEKELNDKRT (131 aa). Acidic residues predominate over residues 237–266; it reads FEYEGGDEEYPQVAEKEDEYDEGYETDNTE. The span at 267–276 shows a compositional bias: low complexity; it reads DVTITTTKTT.

This is an uncharacterized protein from Caenorhabditis elegans.